A 319-amino-acid polypeptide reads, in one-letter code: Aspartate carbamoyltransferase catalytic subunit (319 aa).

Residues R65 and T66 each contribute to the carbamoyl phosphate site. Residue K93 coordinates L-aspartate. 3 residues coordinate carbamoyl phosphate: R115, H149, and Q152. The L-aspartate site is built by R182 and R237. Carbamoyl phosphate-binding residues include G278 and P279.

This sequence belongs to the aspartate/ornithine carbamoyltransferase superfamily. ATCase family. As to quaternary structure, heterododecamer (2C3:3R2) of six catalytic PyrB chains organized as two trimers (C3), and six regulatory PyrI chains organized as three dimers (R2).

It catalyses the reaction carbamoyl phosphate + L-aspartate = N-carbamoyl-L-aspartate + phosphate + H(+). Its pathway is pyrimidine metabolism; UMP biosynthesis via de novo pathway; (S)-dihydroorotate from bicarbonate: step 2/3. Catalyzes the condensation of carbamoyl phosphate and aspartate to form carbamoyl aspartate and inorganic phosphate, the committed step in the de novo pyrimidine nucleotide biosynthesis pathway. This chain is Aspartate carbamoyltransferase catalytic subunit, found in Azoarcus sp. (strain BH72).